A 338-amino-acid polypeptide reads, in one-letter code: MAKLIIPSDYDPKMTIRETEKAIRYIRETFQTEFGTAMNLERISAPMFVKKSSGLNDNLSGWEKPVSFTLHDGNEGELQIVHSLAKWKRWALKHYGFSHGEGLFTNMNAIRKDEEVLDNLHSVYVDQWDWEKVIDKSERTEATLRQTVQRIFETIKGMEYHVRALYPQAAYHLPEEISFVTSEELEARWPSLTPSEREDKICQEKGAVFLEHIGGALPLSKKPHDLRAPDYDDWTLNGDLLFWYEPLQRAFEVSSMGIRVDEDRLQEQLKLAGAEDRLDLPFHQALLKGDLPYSIGGGIGQSRLCMLLLGKAHIGEVQASIWPDEIVEKCQAAKIQLL.

Belongs to the class-II aminoacyl-tRNA synthetase family. AsnA subfamily.

The protein localises to the cytoplasm. The enzyme catalyses L-aspartate + NH4(+) + ATP = L-asparagine + AMP + diphosphate + H(+). It functions in the pathway amino-acid biosynthesis; L-asparagine biosynthesis; L-asparagine from L-aspartate (ammonia route): step 1/1. This chain is Aspartate--ammonia ligase, found in Lactobacillus delbrueckii subsp. bulgaricus (strain ATCC BAA-365 / Lb-18).